The primary structure comprises 43 residues: Protein PsbN (43 aa).

The helical transmembrane segment at 5–27 threads the bilayer; the sequence is NLVAIFVSCLLVSLTGYALYTSF.

It belongs to the PsbN family.

The protein localises to the plastid. It localises to the chloroplast thylakoid membrane. May play a role in photosystem I and II biogenesis. The chain is Protein PsbN from Ephedra sinica (Chinese ephedra).